Here is a 161-residue protein sequence, read N- to C-terminus: Cytochrome b6-f complex subunit 4 (161 aa).

Transmembrane regions (helical) follow at residues leucine 37–valine 57, leucine 96–glutamate 116, and serine 132–isoleucine 152.

Belongs to the cytochrome b family. PetD subfamily. In terms of assembly, the 4 large subunits of the cytochrome b6-f complex are cytochrome b6, subunit IV (17 kDa polypeptide, PetD), cytochrome f and the Rieske protein, while the 4 small subunits are PetG, PetL, PetM and PetN. The complex functions as a dimer.

It localises to the cellular thylakoid membrane. Functionally, component of the cytochrome b6-f complex, which mediates electron transfer between photosystem II (PSII) and photosystem I (PSI), cyclic electron flow around PSI, and state transitions. The sequence is that of Cytochrome b6-f complex subunit 4 from Acaryochloris marina (strain MBIC 11017).